A 227-amino-acid polypeptide reads, in one-letter code: MSTVVSEGRNDGNNRYSPQDEVEDRLPDVVDNRLTENMRVPSFERLPSPTPRYFGSCKWFNVSKGYGFVIDDITGEDLFVHQSNLNMQGFRSLDEGERVSYYIQERSNGKGREAYAVSGEVEGQGLKGSRIHPLGRKKAVSLRCFRCGKFATHKAKSCPNVKTDAKVCYTCGSEEHVSSICPERRRKHRPEQVAAEEAEAARMAAEKSSPTTSDDDIREKNSNSSDE.

A compositionally biased stretch (polar residues) spans 1-17; sequence MSTVVSEGRNDGNNRYS. The interval 1 to 27 is disordered; sequence MSTVVSEGRNDGNNRYSPQDEVEDRLP. The 69-residue stretch at 52 to 120 folds into the CSD domain; the sequence is RYFGSCKWFN…GREAYAVSGE (69 aa). 2 consecutive CCHC-type zinc fingers follow at residues 143-160 and 166-183; these read RCFR…SCPN and KVCY…ICPE. Positions 144, 147, 153, 158, 168, 171, 176, and 181 each coordinate Zn(2+). A disordered region spans residues 181–227; the sequence is CPERRRKHRPEQVAAEEAEAARMAAEKSSPTTSDDDIREKNSNSSDE.

Belongs to the lin-28 family. Component of a complex at least containing lep-2, lin-28 and the long non-coding RNA lep-5, which mediates the degradation of lin-28. Cleavage by caspase ced-3 during larval development probably induces lin-28 degradation.

It localises to the cytoplasm. Heterochronic protein which controls the choice of stage specific cell fates. Regulates the timing of the second larval stage events (L2 events) in the hypodermis. May negatively regulate the larval to adult transition via the suppression of the microRNA (miRNA) let-7 during L3. Through this regulatory role, controls the timing of the sexual maturation of the nervous system. Also has a role in the fox-1-sex-1-mediated determination of sexual fate. Plays a role in governing the developmental timing of male tail tip morphogenesis. Plays a role in controlling the seam cell number during larval stages. Plays a role in vulval development. This chain is Protein lin-28, found in Caenorhabditis elegans.